The primary structure comprises 266 residues: Protein crossbronx-like (266 aa).

The UBC core domain maps to 15–178 (KQGYHILAEY…VQEQAIASRN (164 aa)).

This sequence belongs to the ubiquitin-conjugating enzyme family. FTS subfamily.

The protein is Protein crossbronx-like of Drosophila yakuba (Fruit fly).